We begin with the raw amino-acid sequence, 121 residues long: Large ribosomal subunit protein uL18 (121 aa).

Positions 1 to 22 are enriched in basic residues; the sequence is MIKKPDKKTLRQGKHKRVRRKV. The interval 1–23 is disordered; it reads MIKKPDKKTLRQGKHKRVRRKVA.

Belongs to the universal ribosomal protein uL18 family. In terms of assembly, part of the 50S ribosomal subunit; part of the 5S rRNA/L5/L18/L25 subcomplex. Contacts the 5S and 23S rRNAs.

In terms of biological role, this is one of the proteins that bind and probably mediate the attachment of the 5S RNA into the large ribosomal subunit, where it forms part of the central protuberance. The protein is Large ribosomal subunit protein uL18 of Syntrophomonas wolfei subsp. wolfei (strain DSM 2245B / Goettingen).